A 499-amino-acid chain; its full sequence is Replication factor C large subunit (499 aa).

Residue 50–57 (GPPGVGKT) coordinates ATP. The disordered stretch occupies residues 428–499 (EAERRVEAAE…QATLFDFLKK (72 aa)). Acidic residues predominate over residues 436-472 (AEEEETMEAGEPEEELEEVEEEELTEEELEEAEEEIE). Residues 473 to 484 (TVGKKEKPEKEK) are compositionally biased toward basic and acidic residues.

This sequence belongs to the activator 1 small subunits family. RfcL subfamily. In terms of assembly, heteromultimer composed of small subunits (RfcS) and large subunits (RfcL).

Part of the RFC clamp loader complex which loads the PCNA sliding clamp onto DNA. This Thermococcus kodakarensis (strain ATCC BAA-918 / JCM 12380 / KOD1) (Pyrococcus kodakaraensis (strain KOD1)) protein is Replication factor C large subunit.